We begin with the raw amino-acid sequence, 271 residues long: Probable diacyglycerol O-acyltransferase tgs3 (271 aa).

Belongs to the long-chain O-acyltransferase family.

It carries out the reaction an acyl-CoA + a 1,2-diacyl-sn-glycerol = a triacyl-sn-glycerol + CoA. Its pathway is glycerolipid metabolism; triacylglycerol biosynthesis. Functionally, catalyzes the terminal and only committed step in triacylglycerol synthesis by using diacylglycerol and fatty acyl CoA as substrates. Required for storage lipid synthesis. The polypeptide is Probable diacyglycerol O-acyltransferase tgs3 (tgs3) (Mycobacterium tuberculosis (strain CDC 1551 / Oshkosh)).